The primary structure comprises 515 residues: Na(+)/H(+) antiporter NhaB (515 aa).

The next 11 membrane-spanning stretches (helical) occupy residues Leu23–Val43, Gly45–Leu65, Val96–Phe116, Cys136–Ile156, Leu204–Pro224, Ala245–Phe265, Ala305–Ile325, Phe349–Ile369, Leu393–Val413, Ala449–Ile469, and Ala480–Ile500.

The protein belongs to the NhaB Na(+)/H(+) (TC 2.A.34) antiporter family.

The protein resides in the cell inner membrane. It carries out the reaction 2 Na(+)(in) + 3 H(+)(out) = 2 Na(+)(out) + 3 H(+)(in). Na(+)/H(+) antiporter that extrudes sodium in exchange for external protons. The protein is Na(+)/H(+) antiporter NhaB of Photorhabdus laumondii subsp. laumondii (strain DSM 15139 / CIP 105565 / TT01) (Photorhabdus luminescens subsp. laumondii).